The sequence spans 750 residues: Photosystem I P700 chlorophyll a apoprotein A1 (750 aa).

8 consecutive transmembrane segments (helical) span residues 70–93 (VFSA…FHGA), 156–179 (LYCT…FHYH), 195–219 (LNHH…HVSL), 291–309 (TVHH…GHMY), 346–369 (WHAQ…HHMY), 385–411 (LSLF…IFMV), 433–455 (AIIS…LYIH), and 531–549 (FLVH…LILL). Residues Cys-573 and Cys-582 each contribute to the [4Fe-4S] cluster site. 2 helical membrane passes run 589 to 610 (HVFL…HFSW) and 664 to 686 (LSAY…MFLF). Residue His-675 participates in chlorophyll a' binding. The chlorophyll a site is built by Met-683 and Tyr-691. Trp-692 lines the phylloquinone pocket. The chain crosses the membrane as a helical span at residues 724–744 (AVGVAHYLLGGIATTWAFFLA).

Belongs to the PsaA/PsaB family. The PsaA/B heterodimer binds the P700 chlorophyll special pair and subsequent electron acceptors. PSI consists of a core antenna complex that captures photons, and an electron transfer chain that converts photonic excitation into a charge separation. The eukaryotic PSI reaction center is composed of at least 11 subunits. P700 is a chlorophyll a/chlorophyll a' dimer, A0 is one or more chlorophyll a, A1 is one or both phylloquinones and FX is a shared 4Fe-4S iron-sulfur center. is required as a cofactor.

It is found in the plastid. Its subcellular location is the chloroplast thylakoid membrane. The enzyme catalyses reduced [plastocyanin] + hnu + oxidized [2Fe-2S]-[ferredoxin] = oxidized [plastocyanin] + reduced [2Fe-2S]-[ferredoxin]. Its function is as follows. PsaA and PsaB bind P700, the primary electron donor of photosystem I (PSI), as well as the electron acceptors A0, A1 and FX. PSI is a plastocyanin-ferredoxin oxidoreductase, converting photonic excitation into a charge separation, which transfers an electron from the donor P700 chlorophyll pair to the spectroscopically characterized acceptors A0, A1, FX, FA and FB in turn. Oxidized P700 is reduced on the lumenal side of the thylakoid membrane by plastocyanin. In Psilotum nudum (Whisk fern), this protein is Photosystem I P700 chlorophyll a apoprotein A1.